Consider the following 1036-residue polypeptide: Presequence protease, mitochondrial (1036 aa).

The transit peptide at 1-15 (MWRFSGRRGLCAVQR) directs the protein to the mitochondrion. Histidine 104 provides a ligand contact to Zn(2+). Glutamate 107 functions as the Proton acceptor in the catalytic mechanism. 2 residues coordinate Zn(2+): histidine 108 and glutamate 205. Cysteine 119 and cysteine 556 are oxidised to a cystine. Lysine 759 carries the N6-acetyllysine modification. Lysine 770 carries the N6-acetyllysine; alternate modification. Lysine 770 is modified (N6-succinyllysine; alternate). A disordered region spans residues 806–833 (SKKERKPVRPHIVEKPTPSGPSGAAHVS). Lysine 848 is subject to N6-succinyllysine. At lysine 883 the chain carries N6-acetyllysine. The residue at position 945 (lysine 945) is an N6-succinyllysine.

Belongs to the peptidase M16 family. PreP subfamily. Monomer and homodimer; homodimerization is induced by binding of the substrate. It depends on Zn(2+) as a cofactor. A disulfide bond locks the enzyme in the closed conformation preventing substrate entry into the catalytic chamber.

The protein resides in the mitochondrion matrix. Its activity is regulated as follows. Mainly exists in a closed and catalytically competent conformation but a closed-to-open switch allows substrate entry into the catalytic chamber. Substrate binding induces closure and dimerization. A disulfide bond may lock the enzyme in a closed conformation preventing substrate entry into the catalytic chamber, participating in redox regulation of the enzyme. Inhibited by metal-chelating agents. Inhibited by nickel and zinc excess, and slightly activated by manganese. Metalloendopeptidase of the mitochondrial matrix that functions in peptide cleavage and degradation rather than in protein processing. Has an ATP-independent activity. Specifically cleaves peptides in the range of 5 to 65 residues. Shows a preference for cleavage after small polar residues and before basic residues, but without any positional preference. Degrades the transit peptides of mitochondrial proteins after their cleavage. Also degrades other unstructured peptides. It is also able to degrade amyloid-beta protein 40, one of the peptides produced by APP processing, when it accumulates in mitochondrion. It is a highly efficient protease, at least toward amyloid-beta protein 40. Cleaves that peptide at a specific position and is probably not processive, releasing digested peptides intermediates that can be further cleaved subsequently. It is also able to degrade amyloid-beta protein 42. This is Presequence protease, mitochondrial from Mus musculus (Mouse).